We begin with the raw amino-acid sequence, 477 residues long: Ribulose bisphosphate carboxylase large chain (477 aa).

Positions 1 to 2 are excised as a propeptide; the sequence is MS. Pro-3 carries the N-acetylproline modification. Residues Asn-123 and Thr-173 each coordinate substrate. Lys-175 functions as the Proton acceptor in the catalytic mechanism. Lys-177 serves as a coordination point for substrate. Mg(2+) is bound by residues Lys-201, Asp-203, and Glu-204. Lys-201 carries the N6-carboxylysine modification. His-294 (proton acceptor) is an active-site residue. The substrate site is built by Arg-295, His-327, and Ser-379.

It belongs to the RuBisCO large chain family. Type I subfamily. As to quaternary structure, heterohexadecamer of 8 large chains and 8 small chains; disulfide-linked. The disulfide link is formed within the large subunit homodimers. The cofactor is Mg(2+). The disulfide bond which can form in the large chain dimeric partners within the hexadecamer appears to be associated with oxidative stress and protein turnover.

It is found in the plastid. Its subcellular location is the chloroplast. It carries out the reaction 2 (2R)-3-phosphoglycerate + 2 H(+) = D-ribulose 1,5-bisphosphate + CO2 + H2O. The catalysed reaction is D-ribulose 1,5-bisphosphate + O2 = 2-phosphoglycolate + (2R)-3-phosphoglycerate + 2 H(+). In terms of biological role, ruBisCO catalyzes two reactions: the carboxylation of D-ribulose 1,5-bisphosphate, the primary event in carbon dioxide fixation, as well as the oxidative fragmentation of the pentose substrate in the photorespiration process. Both reactions occur simultaneously and in competition at the same active site. This chain is Ribulose bisphosphate carboxylase large chain, found in Avena sativa (Oat).